A 195-amino-acid chain; its full sequence is Holliday junction branch migration complex subunit RuvA (195 aa).

The interval 1–63 is domain I; sequence MIASVRGEVL…EDSQTLYGFA (63 aa). A domain II region spans residues 64 to 138; that stretch reads DSDARDLFLT…DKVGSSTSSG (75 aa). The tract at residues 138–142 is flexible linker; sequence GVAAA. The domain III stretch occupies residues 143 to 195; sequence GGHGIRGPVVEALVGLGFAVKQAEEATDKVLANDPEATTSSALRAALSMLGKK.

Belongs to the RuvA family. In terms of assembly, homotetramer. Forms an RuvA(8)-RuvB(12)-Holliday junction (HJ) complex. HJ DNA is sandwiched between 2 RuvA tetramers; dsDNA enters through RuvA and exits via RuvB. An RuvB hexamer assembles on each DNA strand where it exits the tetramer. Each RuvB hexamer is contacted by two RuvA subunits (via domain III) on 2 adjacent RuvB subunits; this complex drives branch migration. In the full resolvosome a probable DNA-RuvA(4)-RuvB(12)-RuvC(2) complex forms which resolves the HJ.

The protein localises to the cytoplasm. In terms of biological role, the RuvA-RuvB-RuvC complex processes Holliday junction (HJ) DNA during genetic recombination and DNA repair, while the RuvA-RuvB complex plays an important role in the rescue of blocked DNA replication forks via replication fork reversal (RFR). RuvA specifically binds to HJ cruciform DNA, conferring on it an open structure. The RuvB hexamer acts as an ATP-dependent pump, pulling dsDNA into and through the RuvAB complex. HJ branch migration allows RuvC to scan DNA until it finds its consensus sequence, where it cleaves and resolves the cruciform DNA. This chain is Holliday junction branch migration complex subunit RuvA, found in Mycolicibacterium gilvum (strain PYR-GCK) (Mycobacterium gilvum (strain PYR-GCK)).